A 188-amino-acid chain; its full sequence is dITP/XTP pyrophosphatase (188 aa).

Residue 7 to 12 coordinates substrate; the sequence is TGNIGK. Glu36 and Asp65 together coordinate Mg(2+). The Proton acceptor role is filled by Asp65. Substrate is bound by residues Ser66, 141–144, Lys164, and 169–170; these read FGYD and HR.

This sequence belongs to the HAM1 NTPase family. Homodimer. Requires Mg(2+) as cofactor.

It carries out the reaction XTP + H2O = XMP + diphosphate + H(+). The enzyme catalyses dITP + H2O = dIMP + diphosphate + H(+). It catalyses the reaction ITP + H2O = IMP + diphosphate + H(+). Its function is as follows. Pyrophosphatase that catalyzes the hydrolysis of nucleoside triphosphates to their monophosphate derivatives, with a high preference for the non-canonical purine nucleotides XTP (xanthosine triphosphate), dITP (deoxyinosine triphosphate) and ITP. Seems to function as a house-cleaning enzyme that removes non-canonical purine nucleotides from the nucleotide pool, thus preventing their incorporation into DNA/RNA and avoiding chromosomal lesions. The polypeptide is dITP/XTP pyrophosphatase (Methanopyrus kandleri (strain AV19 / DSM 6324 / JCM 9639 / NBRC 100938)).